The sequence spans 384 residues: tRNA 2-selenouridine synthase (384 aa).

The region spanning 15–138 is the Rhodanese domain; that stretch reads FVAGKPLIDL…MRQYLIGVIE (124 aa). The S-selanylcysteine intermediate role is filled by Cys-98.

Belongs to the SelU family. As to quaternary structure, monomer.

It catalyses the reaction 5-methylaminomethyl-2-thiouridine(34) in tRNA + selenophosphate + (2E)-geranyl diphosphate + H2O + H(+) = 5-methylaminomethyl-2-selenouridine(34) in tRNA + (2E)-thiogeraniol + phosphate + diphosphate. The enzyme catalyses 5-methylaminomethyl-2-thiouridine(34) in tRNA + (2E)-geranyl diphosphate = 5-methylaminomethyl-S-(2E)-geranyl-thiouridine(34) in tRNA + diphosphate. It carries out the reaction 5-methylaminomethyl-S-(2E)-geranyl-thiouridine(34) in tRNA + selenophosphate + H(+) = 5-methylaminomethyl-2-(Se-phospho)selenouridine(34) in tRNA + (2E)-thiogeraniol. The catalysed reaction is 5-methylaminomethyl-2-(Se-phospho)selenouridine(34) in tRNA + H2O = 5-methylaminomethyl-2-selenouridine(34) in tRNA + phosphate. In terms of biological role, involved in the post-transcriptional modification of the uridine at the wobble position (U34) of tRNA(Lys), tRNA(Glu) and tRNA(Gln). Catalyzes the conversion of 2-thiouridine (S2U-RNA) to 2-selenouridine (Se2U-RNA). Acts in a two-step process involving geranylation of 2-thiouridine (S2U) to S-geranyl-2-thiouridine (geS2U) and subsequent selenation of the latter derivative to 2-selenouridine (Se2U) in the tRNA chain. This chain is tRNA 2-selenouridine synthase, found in Shewanella sp. (strain MR-4).